The sequence spans 503 residues: Aromatase (503 aa).

Transmembrane regions (helical) follow at residues 19 to 39, 53 to 73, and 303 to 323; these read EVVP…LLVW, FLGI…IGSA, and MLIA…FLIA. Substrate-binding residues include D309 and M374. A heme-binding site is contributed by C437.

It belongs to the cytochrome P450 family. It depends on heme as a cofactor.

It is found in the endoplasmic reticulum membrane. The protein localises to the microsome membrane. It catalyses the reaction testosterone + 3 reduced [NADPH--hemoprotein reductase] + 3 O2 = 17beta-estradiol + formate + 3 oxidized [NADPH--hemoprotein reductase] + 4 H2O + 4 H(+). The enzyme catalyses androst-4-ene-3,17-dione + 3 reduced [NADPH--hemoprotein reductase] + 3 O2 = estrone + formate + 3 oxidized [NADPH--hemoprotein reductase] + 4 H2O + 4 H(+). It carries out the reaction androst-4-ene-3,17-dione + reduced [NADPH--hemoprotein reductase] + O2 = 19-hydroxyandrost-4-ene-3,17-dione + oxidized [NADPH--hemoprotein reductase] + H2O + H(+). The catalysed reaction is 19-hydroxyandrost-4-ene-3,17-dione + reduced [NADPH--hemoprotein reductase] + O2 = 19-oxo-androst-4-ene-3,17-dione + oxidized [NADPH--hemoprotein reductase] + 2 H2O + H(+). It catalyses the reaction 19-oxo-androst-4-ene-3,17-dione + reduced [NADPH--hemoprotein reductase] + O2 = estrone + formate + oxidized [NADPH--hemoprotein reductase] + H2O + 2 H(+). The enzyme catalyses estrone + reduced [NADPH--hemoprotein reductase] + O2 = 2-hydroxyestrone + oxidized [NADPH--hemoprotein reductase] + H2O + H(+). It carries out the reaction 17beta-hydroxy-5alpha-androstan-3-one + reduced [NADPH--hemoprotein reductase] + O2 = 17beta,19-dihydroxy-3-oxo-5alpha-androstanone + oxidized [NADPH--hemoprotein reductase] + H2O + H(+). The catalysed reaction is 17beta,19-dihydroxy-3-oxo-5alpha-androstanone + reduced [NADPH--hemoprotein reductase] + O2 = 17beta-hydroxy-3,19-dioxo-5alpha-androstanone + oxidized [NADPH--hemoprotein reductase] + 2 H2O + H(+). It catalyses the reaction 17beta-hydroxy-3,19-dioxo-5alpha-androstanone + reduced [NADPH--hemoprotein reductase] + O2 = 17beta-hydroxy-3-oxo-19-nor-5alpha-androst-1-ene + formate + oxidized [NADPH--hemoprotein reductase] + H2O + 2 H(+). It participates in steroid hormone biosynthesis. In terms of biological role, a cytochrome P450 monooxygenase that catalyzes the conversion of C19 androgens, androst-4-ene-3,17-dione (androstenedione) and testosterone to the C18 estrogens, estrone and estradiol, respectively. Catalyzes three successive oxidations of C19 androgens: two conventional oxidations at C19 yielding 19-hydroxy and 19-oxo/19-aldehyde derivatives, followed by a third oxidative aromatization step that involves C1-beta hydrogen abstraction combined with cleavage of the C10-C19 bond to yield a phenolic A ring and formic acid. Alternatively, the third oxidative reaction yields a 19-norsteroid and formic acid. Converts dihydrotestosterone to delta1,10-dehydro 19-nordihydrotestosterone and may play a role in homeostasis of this potent androgen. Also displays 2-hydroxylase activity toward estrone. Mechanistically, uses molecular oxygen inserting one oxygen atom into a substrate, and reducing the second into a water molecule, with two electrons provided by NADPH via cytochrome P450 reductase (CPR; NADPH-ferrihemoprotein reductase). The sequence is that of Aromatase (CYP19A1) from Capra hircus (Goat).